Consider the following 145-residue polypeptide: 3-dehydroquinate dehydratase (145 aa).

Catalysis depends on Tyr-24, which acts as the Proton acceptor. Substrate is bound by residues Asn-76, His-82, and Asp-89. His-102 serves as the catalytic Proton donor. Substrate is bound by residues 103-104 and Arg-113; that span reads VS.

The protein belongs to the type-II 3-dehydroquinase family. As to quaternary structure, homododecamer.

It catalyses the reaction 3-dehydroquinate = 3-dehydroshikimate + H2O. It functions in the pathway metabolic intermediate biosynthesis; chorismate biosynthesis; chorismate from D-erythrose 4-phosphate and phosphoenolpyruvate: step 3/7. Functionally, catalyzes a trans-dehydration via an enolate intermediate. The protein is 3-dehydroquinate dehydratase of Janthinobacterium sp. (strain Marseille) (Minibacterium massiliensis).